Consider the following 409-residue polypeptide: Glycosyltransferase GtfC (409 aa).

It belongs to the glycosyltransferase 28 family.

It catalyses the reaction dTDP-beta-L-vancosamine + devancoaminyl-vancomycin = epivancomycin + dTDP + H(+). It carries out the reaction chloroorienticin B + dTDP-beta-L-vancosamine = chloroeremomycin + dTDP + H(+). It participates in antibiotic biosynthesis; vancomycin biosynthesis. Catalyzes the attachment of dTDP-L-4-epi-vancosamine to chloroorienticin B to form chloroeremomycin in the biosynthesis of glycopeptide antibiotic chloroeremomycin, a member of the vancomycin group of antibiotics. Also able to use dTDP-L-4-epi-vancosamine and devancoaminyl-vancomycin (DVV) to create epivancomycin. Acts downstream of GtfA. This chain is Glycosyltransferase GtfC (gtfC), found in Amycolatopsis orientalis (Nocardia orientalis).